We begin with the raw amino-acid sequence, 344 residues long: N-lysine methyltransferase KMT5A-A (344 aa).

The segment at 143-176 (TSSKHRKPARRKVKRSTKRAAESKSPANRKVTDY) is disordered. Basic residues predominate over residues 145–160 (SKHRKPARRKVKRSTK). The region spanning 208–329 (DGMMVRFIEG…EGEELLYDYG (122 aa)) is the SET domain. S-adenosyl-L-methionine-binding positions include 218–220 (KGR), tyrosine 263, and 290–291 (NH).

This sequence belongs to the class V-like SAM-binding methyltransferase superfamily. Histone-lysine methyltransferase family. PR/SET subfamily.

The protein resides in the nucleus. It is found in the chromosome. It carries out the reaction L-lysyl(20)-[histone H4] + S-adenosyl-L-methionine = N(6)-methyl-L-lysyl(20)-[histone H4] + S-adenosyl-L-homocysteine + H(+). It catalyses the reaction L-lysyl-[protein] + S-adenosyl-L-methionine = N(6)-methyl-L-lysyl-[protein] + S-adenosyl-L-homocysteine + H(+). In terms of biological role, protein-lysine N-methyltransferase that monomethylates both histones and non-histone proteins. Specifically monomethylates 'Lys-20' of histone H4 (H4K20me1). H4K20me1 is enriched during mitosis and represents a specific tag for epigenetic transcriptional repression. Mainly functions in euchromatin regions, thereby playing a central role in the silencing of euchromatic genes. Required for cell proliferation, probably by contributing to the maintenance of proper higher-order structure of DNA during mitosis. Involved in chromosome condensation and proper cytokinesis. The sequence is that of N-lysine methyltransferase KMT5A-A from Danio rerio (Zebrafish).